The chain runs to 70 residues: MIYKIYYQEHPERNPKRETTISMYIEAESLPQAREIIEENTEYNVEFIEELSDKAVTYEKANPNFEVTTF.

It belongs to the RNA polymerase subunit epsilon family. As to quaternary structure, RNAP is composed of a core of 2 alpha, a beta and a beta' subunit. The core is associated with a delta subunit, and at least one of epsilon or omega. When a sigma factor is associated with the core the holoenzyme is formed, which can initiate transcription.

The catalysed reaction is RNA(n) + a ribonucleoside 5'-triphosphate = RNA(n+1) + diphosphate. A non-essential component of RNA polymerase (RNAP). The protein is DNA-directed RNA polymerase subunit epsilon of Leuconostoc mesenteroides subsp. mesenteroides (strain ATCC 8293 / DSM 20343 / BCRC 11652 / CCM 1803 / JCM 6124 / NCDO 523 / NBRC 100496 / NCIMB 8023 / NCTC 12954 / NRRL B-1118 / 37Y).